Consider the following 293-residue polypeptide: Cytidine deaminase (293 aa).

CMP/dCMP-type deaminase domains are found at residues 47-166 (EDRA…FGPA) and 186-293 (ESED…YQAV). Residue 88–90 (NME) coordinates substrate. His101 lines the Zn(2+) pocket. Glu103 functions as the Proton donor in the catalytic mechanism. Zn(2+)-binding residues include Cys128 and Cys131.

The protein belongs to the cytidine and deoxycytidylate deaminase family. Homodimer. The cofactor is Zn(2+).

The enzyme catalyses cytidine + H2O + H(+) = uridine + NH4(+). It carries out the reaction 2'-deoxycytidine + H2O + H(+) = 2'-deoxyuridine + NH4(+). Its function is as follows. This enzyme scavenges exogenous and endogenous cytidine and 2'-deoxycytidine for UMP synthesis. This chain is Cytidine deaminase, found in Aeromonas salmonicida (strain A449).